We begin with the raw amino-acid sequence, 570 residues long: Proline--tRNA ligase (570 aa).

The protein belongs to the class-II aminoacyl-tRNA synthetase family. ProS type 1 subfamily. Homodimer.

The protein resides in the cytoplasm. It catalyses the reaction tRNA(Pro) + L-proline + ATP = L-prolyl-tRNA(Pro) + AMP + diphosphate. Catalyzes the attachment of proline to tRNA(Pro) in a two-step reaction: proline is first activated by ATP to form Pro-AMP and then transferred to the acceptor end of tRNA(Pro). As ProRS can inadvertently accommodate and process non-cognate amino acids such as alanine and cysteine, to avoid such errors it has two additional distinct editing activities against alanine. One activity is designated as 'pretransfer' editing and involves the tRNA(Pro)-independent hydrolysis of activated Ala-AMP. The other activity is designated 'posttransfer' editing and involves deacylation of mischarged Ala-tRNA(Pro). The misacylated Cys-tRNA(Pro) is not edited by ProRS. This is Proline--tRNA ligase from Neisseria meningitidis serogroup B (strain ATCC BAA-335 / MC58).